The chain runs to 1256 residues: Bifunctional autolysin (1256 aa).

Positions Met1 to Ala29 are cleaved as a signal peptide. Positions Gly103–Gly138 are enriched in polar residues. Disordered stretches follow at residues Gly103 to Asn151, Lys172 to Pro219, and Thr419 to Gly440. Composition is skewed to low complexity over residues Lys172–Thr196 and Ser421–Thr439. The N-acetylmuramoyl-L-alanine amidase stretch occupies residues Ala199–Lys775. GW domains lie at Thr443–Ala517, Ser519–Lys593, Thr612–Ala686, Ser688–Ala762, Thr784–Leu859, Lys861–Ala936, and Ala943–Ile1017. The segment at Ala776–Lys1256 is endo-beta-N-acetylglucosaminidase.

In the N-terminal section; belongs to the N-acetylmuramoyl-L-alanine amidase 2 family. It in the C-terminal section; belongs to the glycosyl hydrolase 73 family. As to quaternary structure, oligomer; forms a ring structure at the cell surface which is important for efficient partitioning of daughter cells after cell division. Undergoes proteolytic processing to generate the two extracellular lytic enzymes, probably at the septal region on the cell surface.

It localises to the secreted. The enzyme catalyses Hydrolyzes the link between N-acetylmuramoyl residues and L-amino acid residues in certain cell-wall glycopeptides.. It carries out the reaction an N(4)-(oligosaccharide-(1-&gt;3)-[oligosaccharide-(1-&gt;6)]-beta-D-Man-(1-&gt;4)-beta-D-GlcNAc-(1-&gt;4)-alpha-D-GlcNAc)-L-asparaginyl-[protein] + H2O = an oligosaccharide-(1-&gt;3)-[oligosaccharide-(1-&gt;6)]-beta-D-Man-(1-&gt;4)-D-GlcNAc + N(4)-(N-acetyl-beta-D-glucosaminyl)-L-asparaginyl-[protein]. Endohydrolysis of the di-N-acetylchitobiosyl unit in high-mannose glycopeptides and glycoproteins containing the -[(Man)5(GlcNAc)2]-Asn structure. One N-acetyl-D-glucosamine residue remains attached to the protein; the rest of the oligosaccharide is released intact. Cleaves the peptidoglycan connecting the daughter cells at the end of the cell division cycle, resulting in the separation of the two newly divided cells. Acts as an autolysin in penicillin-induced lysis. This is Bifunctional autolysin (atl) from Staphylococcus aureus (strain COL).